The sequence spans 74 residues: Coleoptericin (74 aa).

The interval 1–74 is disordered; sequence SLQGGAPNFP…TWHVGGTYRR (74 aa).

The protein belongs to the coleoptericin family.

It localises to the secreted. Responsible for the anti Gram-negative activity of immune hemolymph of Z.atratus. This is Coleoptericin from Zophobas atratus (Giant mealworm beetle).